Here is a 381-residue protein sequence, read N- to C-terminus: Succinyl-diaminopimelate desuccinylase (381 aa).

Position 72 (histidine 72) interacts with Zn(2+). Residue aspartate 74 is part of the active site. Aspartate 105 serves as a coordination point for Zn(2+). The Proton acceptor role is filled by glutamate 139. 3 residues coordinate Zn(2+): glutamate 140, glutamate 168, and histidine 354.

The protein belongs to the peptidase M20A family. DapE subfamily. Homodimer. Zn(2+) is required as a cofactor. Requires Co(2+) as cofactor.

The enzyme catalyses N-succinyl-(2S,6S)-2,6-diaminopimelate + H2O = (2S,6S)-2,6-diaminopimelate + succinate. It functions in the pathway amino-acid biosynthesis; L-lysine biosynthesis via DAP pathway; LL-2,6-diaminopimelate from (S)-tetrahydrodipicolinate (succinylase route): step 3/3. In terms of biological role, catalyzes the hydrolysis of N-succinyl-L,L-diaminopimelic acid (SDAP), forming succinate and LL-2,6-diaminopimelate (DAP), an intermediate involved in the bacterial biosynthesis of lysine and meso-diaminopimelic acid, an essential component of bacterial cell walls. In Shewanella sp. (strain MR-7), this protein is Succinyl-diaminopimelate desuccinylase.